The following is a 239-amino-acid chain: uncharacterized protein (239 aa).

This is an uncharacterized protein from Saccharomyces cerevisiae (strain ATCC 204508 / S288c) (Baker's yeast).